The following is a 472-amino-acid chain: MIAATPAKSKPSDVNLEQTFKGVSETSKIDLRRSRAAYRPLELSPTPSIFARNYQRNAVDFTGFFVLFWVAVSIMIFMSFLENFELTGRPVVGTIFKYFQSNLLDLAKADLAMSSMFLLAFPFQKIFALGYLRWYGLGVYLYSILILLFLSHCVLRCCLSNWSWTHRAMFILHSMVILMKLHSYNVVNGWYSYCYHSLNKLQSKKTDLDDDERSSVEFYEHCLNHHGNTYPENLTIPNALDFLFMPSLCYQLYYPRTAHVRIHYLIECALGTFGCIFLLVIISDHFMVPVLAKAIRTIIEAPEDASATYFAIRLGHTVAFLMFPFMLSFLLVFWVIFEGVCNFSAEITRFADRNFYDDWWNCWTWDQFARTWNKPVHYFLLRHVYVPLNSFMSKSLSTFFTFFVSSVLHELVMGCITLKIRGYGLFFQMTQIPYIIIQRQKFVRRHRLLGNIAFWFSIIIGIALIAALYILF.

Ser12 bears the Phosphoserine mark. The next 3 membrane-spanning stretches (helical) occupy residues 61-81 (FTGF…MSFL), 111-131 (LAMS…ALGY), and 135-155 (YGLG…HCVL). An N-linked (GlcNAc...) asparagine glycan is attached at Asn161. A helical membrane pass occupies residues 170–190 (FILHSMVILMKLHSYNVVNGW). Asn233 is a glycosylation site (N-linked (GlcNAc...) asparagine). The next 2 membrane-spanning stretches (helical) occupy residues 262–282 (IHYL…LVII) and 317–337 (TVAF…WVIF). The N-linked (GlcNAc...) asparagine glycan is linked to Asn342. The short motif at 355–361 (FYDDWWN) is the FYXDWWN motif element. His409 is an active-site residue. A helical membrane pass occupies residues 452-472 (IAFWFSIIIGIALIAALYILF).

Belongs to the membrane-bound acyltransferase family. Sterol o-acyltransferase subfamily.

Its subcellular location is the endoplasmic reticulum membrane. In terms of biological role, sterol O-acyltransferase that catalyzes the formation of stery esters. This chain is Probable sterol O-acyltransferase 2 (are2), found in Schizosaccharomyces pombe (strain 972 / ATCC 24843) (Fission yeast).